A 391-amino-acid polypeptide reads, in one-letter code: Zinc finger protein 414 (391 aa).

A disordered region spans residues 1–110; sequence MDEEPSGPSL…RRPPPGKQIP (110 aa). The span at 84-93 shows a compositional bias: polar residues; it reads GPTSTVSGTS. 3 consecutive C2H2-type zinc fingers follow at residues 109–133, 145–169, and 176–201; these read IPCSSPGCCLSFPSVRDLAQHLRTH, FRCSALSCTETFPNMQELVAHGKLH, and FKCENCLLRIRTHRSLFKHLHVCAEH. Disordered stretches follow at residues 201–243, 274–312, and 344–391; these read HAQS…LEPF, LAAAPGPPASSAAVWKKSQGAGGSPRRPQGGSDAPSGHA, and HLED…FSPL. Over residues 214–226 the composition is skewed to basic and acidic residues; the sequence is LDRESPASERPPE. Over residues 227–236 the composition is skewed to pro residues; the sequence is SDPAPAPGLP. Residues 274–286 show a composition bias toward low complexity; the sequence is LAAAPGPPASSAA. Residues 326-348 form a C2H2-type 4 zinc finger; the sequence is YSCMQCAFSTASRPAMTLHLEDH. The span at 353–372 shows a compositional bias: pro residues; it reads PAAPAPGQPRPDAPADPAPL.

The protein belongs to the krueppel C2H2-type zinc-finger protein family.

It localises to the nucleus. In terms of biological role, may be involved in transcriptional regulation. In Bos taurus (Bovine), this protein is Zinc finger protein 414 (ZNF414).